We begin with the raw amino-acid sequence, 974 residues long: RING finger protein nhl-1 (974 aa).

The segment at 1 to 29 is disordered; it reads MSSSPQNEAEAREKMRELMSRPPSSRPAD. The segment covering 9-19 has biased composition (basic and acidic residues); the sequence is AEAREKMRELM. The RING-type zinc-finger motif lies at 43–84; the sequence is CPICLDRYKQPKLLPCQHTFCYPCLESCADTLHRNLKCPECR. Disordered stretches follow at residues 360 to 395 and 416 to 548; these read VKSD…IRYR and SLLT…DFPV. The segment covering 416–431 has biased composition (polar residues); sequence SLLTTSVTADSSSRTS. The segment covering 437–446 has biased composition (basic and acidic residues); that stretch reads RVTRSVEPTK. Residues 447–465 show a composition bias toward polar residues; that stretch reads SRPTSLIVPNTETPRTVSP. A compositionally biased stretch (pro residues) spans 488-501; sequence APLPQLPIRKPPLP. The segment covering 511-528 has biased composition (basic and acidic residues); that stretch reads LNEKVETIRRAHQQRQDA. Residues 529–538 are compositionally biased toward low complexity; sequence SRAASRAVSS. 6 NHL repeats span residues 699–742, 746–788, 792–835, 839–883, 887–930, and 934–974; these read RAVF…FDKD, VRQF…FGLE, LFSF…FDKN, IAKF…FDPH, LFSF…FDAQ, and VSSF…IQIF.

As to quaternary structure, interacts with ubc-13.

In Caenorhabditis elegans, this protein is RING finger protein nhl-1.